The chain runs to 166 residues: Large ribosomal subunit protein uL10 (166 aa).

Belongs to the universal ribosomal protein uL10 family. Part of the ribosomal stalk of the 50S ribosomal subunit. The N-terminus interacts with L11 and the large rRNA to form the base of the stalk. The C-terminus forms an elongated spine to which L12 dimers bind in a sequential fashion forming a multimeric L10(L12)X complex.

Its function is as follows. Forms part of the ribosomal stalk, playing a central role in the interaction of the ribosome with GTP-bound translation factors. This is Large ribosomal subunit protein uL10 from Bacillus cereus (strain 03BB102).